A 221-amino-acid chain; its full sequence is ATP synthase subunit delta (221 aa).

The segment covering 1-13 (MGPVPEEHQRESE) has biased composition (basic and acidic residues). A disordered region spans residues 1–31 (MGPVPEEHQRESETVASNGANESGAAVTGIP).

It belongs to the ATPase delta chain family. In terms of assembly, F-type ATPases have 2 components, F(1) - the catalytic core - and F(0) - the membrane proton channel. F(1) has five subunits: alpha(3), beta(3), gamma(1), delta(1), epsilon(1). F(0) has three main subunits: a(1), b(2) and c(10-14). The alpha and beta chains form an alternating ring which encloses part of the gamma chain. F(1) is attached to F(0) by a central stalk formed by the gamma and epsilon chains, while a peripheral stalk is formed by the delta and b chains.

The protein resides in the cell inner membrane. F(1)F(0) ATP synthase produces ATP from ADP in the presence of a proton or sodium gradient. F-type ATPases consist of two structural domains, F(1) containing the extramembraneous catalytic core and F(0) containing the membrane proton channel, linked together by a central stalk and a peripheral stalk. During catalysis, ATP synthesis in the catalytic domain of F(1) is coupled via a rotary mechanism of the central stalk subunits to proton translocation. Its function is as follows. This protein is part of the stalk that links CF(0) to CF(1). It either transmits conformational changes from CF(0) to CF(1) or is implicated in proton conduction. This Granulibacter bethesdensis (strain ATCC BAA-1260 / CGDNIH1) protein is ATP synthase subunit delta.